Reading from the N-terminus, the 281-residue chain is Microtubule-associated protein RP/EB family member 3 (281 aa).

The Calponin-homology (CH) domain occupies 14-116 (NLSRHDMLAW…FIQWFKKFFD (103 aa)). The tract at residues 157–181 (VPQRTSPTGPKNMQTSGRLSNVAPP) is disordered. The segment covering 158 to 175 (PQRTSPTGPKNMQTSGRL) has biased composition (polar residues). Phosphoserine is present on residues Ser-162 and Ser-176. The 71-residue stretch at 194 to 264 (GGHETDAQIL…LYATEEGFAP (71 aa)) folds into the EB1 C-terminal domain. The interval 217 to 260 (DGLEKERDFYFSKLRDIELICQEHESENSPVISGIIGILYATEE) is APC-binding. The tract at residues 217–281 (DGLEKERDFY…EHQQEDQDEY (65 aa)) is DCTN1-binding. Positions 261–281 (GFAPPEDDEIEEHQQEDQDEY) are disordered. A compositionally biased stretch (basic and acidic residues) spans 272 to 281 (EHQQEDQDEY).

Belongs to the MAPRE family. As to quaternary structure, homodimer. Heterodimer with MAPRE1. Binds monomeric and polymerized GTP-bound tubulin. Interacts with APC2. Interacts with DCTN1 and SRCIN1. Binds to the C-terminal domain of APC. Interacts (via C-terminus) with CLIP1. Interacts with SLAIN2 and SLAIN1. Interacts with AKAP9. Interacts with PDE4DIP. Interacts with PDE4DIP isoform 13/MMG8/SMYLE; this interaction is required for its recruitment to the Golgi apparatus. Predominantly expressed in brain and muscle.

The protein resides in the cytoplasm. Its subcellular location is the cytoskeleton. In terms of biological role, plus-end tracking protein (+TIP) that binds to the plus-end of microtubules and regulates the dynamics of the microtubule cytoskeleton. Promotes microtubule growth. May be involved in spindle function by stabilizing microtubules and anchoring them at centrosomes. Also acts as a regulator of minus-end microtubule organization: interacts with the complex formed by AKAP9 and PDE4DIP, leading to recruit CAMSAP2 to the Golgi apparatus, thereby tethering non-centrosomal minus-end microtubules to the Golgi, an important step for polarized cell movement. Promotes elongation of CAMSAP2-decorated microtubule stretches on the minus-end of microtubules. The sequence is that of Microtubule-associated protein RP/EB family member 3 (MAPRE3) from Homo sapiens (Human).